The sequence spans 264 residues: tRNA-uridine aminocarboxypropyltransferase A (264 aa).

Zn(2+) contacts are provided by Cys-25, Cys-28, Cys-35, and Cys-37. The short motif at 144–147 (DATW) is the DXTW element. A disordered region spans residues 245 to 264 (RPKLLKKRFQNQQPLEQEEE). Residues 254–264 (QNQQPLEQEEE) show a composition bias toward polar residues.

Belongs to the TDD superfamily. DTWD2 family.

The catalysed reaction is a uridine in tRNA + S-adenosyl-L-methionine = a 3-[(3S)-3-amino-3-carboxypropyl]uridine in tRNA + S-methyl-5'-thioadenosine + H(+). In terms of biological role, catalyzes the formation of 3-(3-amino-3-carboxypropyl)uridine (acp3U) at position 20a in the D-loop of several cytoplasmic tRNAs (acp3U(20a)). The chain is tRNA-uridine aminocarboxypropyltransferase A from Arabidopsis thaliana (Mouse-ear cress).